Reading from the N-terminus, the 175-residue chain is Epididymal-specific lipocalin-8 (175 aa).

An N-terminal signal peptide occupies residues 1-25 (MPGAAEALPTVTVTLVAGAVPPASG). N-linked (GlcNAc...) asparagine glycosylation is found at Asn-66 and Asn-74. Cys-79 and Cys-166 are oxidised to a cystine.

The protein belongs to the calycin superfamily. Lipocalin family.

The protein resides in the secreted. Functionally, may play a role in male fertility. May act as a retinoid carrier protein within the epididymis. This is Epididymal-specific lipocalin-8 (LCN8) from Homo sapiens (Human).